Reading from the N-terminus, the 113-residue chain is Nucleoid-associated protein SAV_4556 (113 aa).

This sequence belongs to the YbaB/EbfC family. Homodimer.

Its subcellular location is the cytoplasm. It localises to the nucleoid. Functionally, binds to DNA and alters its conformation. May be involved in regulation of gene expression, nucleoid organization and DNA protection. This is Nucleoid-associated protein SAV_4556 from Streptomyces avermitilis (strain ATCC 31267 / DSM 46492 / JCM 5070 / NBRC 14893 / NCIMB 12804 / NRRL 8165 / MA-4680).